Here is a 229-residue protein sequence, read N- to C-terminus: Cytochrome c oxidase subunit 2 (229 aa).

At 1-14 (MPTPNQTNFQDAAS) the chain is on the mitochondrial intermembrane side. A helical transmembrane segment spans residues 15–45 (PLMEELTHFHDHTLMIVFMISLLVLYILLSM). The Mitochondrial matrix portion of the chain corresponds to 46 to 59 (LSTKLTHTNTANAQ). The helical transmembrane segment at 60 to 87 (QAEMVWTILPAIILITIALPSLQILYMM) threads the bilayer. Topologically, residues 88–229 (DEINKPHMTI…DLWLAMIDTL (142 aa)) are mitochondrial intermembrane. The Cu cation site is built by His161, Cys196, Glu198, Cys200, His204, and Met207. Glu198 is a binding site for Mg(2+).

The protein belongs to the cytochrome c oxidase subunit 2 family. As to quaternary structure, component of the cytochrome c oxidase (complex IV, CIV), a multisubunit enzyme composed of 14 subunits. The complex is composed of a catalytic core of 3 subunits MT-CO1, MT-CO2 and MT-CO3, encoded in the mitochondrial DNA, and 11 supernumerary subunits COX4I, COX5A, COX5B, COX6A, COX6B, COX6C, COX7A, COX7B, COX7C, COX8 and NDUFA4, which are encoded in the nuclear genome. The complex exists as a monomer or a dimer and forms supercomplexes (SCs) in the inner mitochondrial membrane with NADH-ubiquinone oxidoreductase (complex I, CI) and ubiquinol-cytochrome c oxidoreductase (cytochrome b-c1 complex, complex III, CIII), resulting in different assemblies (supercomplex SCI(1)III(2)IV(1) and megacomplex MCI(2)III(2)IV(2)). Found in a complex with TMEM177, COA6, COX18, COX20, SCO1 and SCO2. Interacts with TMEM177 in a COX20-dependent manner. Interacts with COX20. Interacts with COX16. Cu cation is required as a cofactor.

The protein localises to the mitochondrion inner membrane. The catalysed reaction is 4 Fe(II)-[cytochrome c] + O2 + 8 H(+)(in) = 4 Fe(III)-[cytochrome c] + 2 H2O + 4 H(+)(out). Component of the cytochrome c oxidase, the last enzyme in the mitochondrial electron transport chain which drives oxidative phosphorylation. The respiratory chain contains 3 multisubunit complexes succinate dehydrogenase (complex II, CII), ubiquinol-cytochrome c oxidoreductase (cytochrome b-c1 complex, complex III, CIII) and cytochrome c oxidase (complex IV, CIV), that cooperate to transfer electrons derived from NADH and succinate to molecular oxygen, creating an electrochemical gradient over the inner membrane that drives transmembrane transport and the ATP synthase. Cytochrome c oxidase is the component of the respiratory chain that catalyzes the reduction of oxygen to water. Electrons originating from reduced cytochrome c in the intermembrane space (IMS) are transferred via the dinuclear copper A center (CU(A)) of subunit 2 and heme A of subunit 1 to the active site in subunit 1, a binuclear center (BNC) formed by heme A3 and copper B (CU(B)). The BNC reduces molecular oxygen to 2 water molecules using 4 electrons from cytochrome c in the IMS and 4 protons from the mitochondrial matrix. The protein is Cytochrome c oxidase subunit 2 (MT-CO2) of Pelomedusa subrufa (African side-necked turtle).